The following is a 336-amino-acid chain: Aspartate--ammonia ligase (336 aa).

It belongs to the class-II aminoacyl-tRNA synthetase family. AsnA subfamily.

The protein localises to the cytoplasm. The catalysed reaction is L-aspartate + NH4(+) + ATP = L-asparagine + AMP + diphosphate + H(+). Its pathway is amino-acid biosynthesis; L-asparagine biosynthesis; L-asparagine from L-aspartate (ammonia route): step 1/1. This chain is Aspartate--ammonia ligase, found in Clostridium perfringens (strain ATCC 13124 / DSM 756 / JCM 1290 / NCIMB 6125 / NCTC 8237 / Type A).